A 230-amino-acid chain; its full sequence is Octanoyltransferase (230 aa).

The 178-residue stretch at 38 to 215 folds into the BPL/LPL catalytic domain; the sequence is AGGADTLLLL…AVCAALDGVL (178 aa). Substrate contacts are provided by residues 76 to 83, 145 to 147, and 158 to 160; these read RGGKITWH, AIG, and GFA. Residue Cys176 is the Acyl-thioester intermediate of the active site.

This sequence belongs to the LipB family.

The protein resides in the cytoplasm. It carries out the reaction octanoyl-[ACP] + L-lysyl-[protein] = N(6)-octanoyl-L-lysyl-[protein] + holo-[ACP] + H(+). Its pathway is protein modification; protein lipoylation via endogenous pathway; protein N(6)-(lipoyl)lysine from octanoyl-[acyl-carrier-protein]: step 1/2. Catalyzes the transfer of endogenously produced octanoic acid from octanoyl-acyl-carrier-protein onto the lipoyl domains of lipoate-dependent enzymes. Lipoyl-ACP can also act as a substrate although octanoyl-ACP is likely to be the physiological substrate. The sequence is that of Octanoyltransferase from Mycobacterium tuberculosis (strain ATCC 25177 / H37Ra).